The following is a 1252-amino-acid chain: Elongator complex protein 1 (1252 aa).

Residues 814 to 1252 are mediates dimerization; that stretch reads VDVNDLYNVA…MMDWQHEILQ (439 aa). Serine 1094 bears the Phosphoserine mark. The segment at 1097-1116 is disordered; sequence SSQYSGTSRRTGKTFRSSKN. The segment covering 1106–1116 has biased composition (basic residues); it reads RTGKTFRSSKN. Positions 1111–1129 are required for binding to tRNA; the sequence is FRSSKNRRKHERKLFSLKP.

The protein belongs to the ELP1/IKA1 family. As to quaternary structure, homodimer. Component of the elongator complex composed of Elp1, Elp2, Elp3, Elp4, Elp5 and Elp6. The elongator complex associates with and stabilizes microtubules; efficient interaction requires the full complex.

It localises to the cytoplasm. The protein localises to the nucleus. The protein resides in the cytoskeleton. It is found in the spindle. Its pathway is tRNA modification; 5-methoxycarbonylmethyl-2-thiouridine-tRNA biosynthesis. Functionally, component of the elongator complex, which is required for multiple tRNA modifications, including mcm5U (5-methoxycarbonylmethyl uridine), mcm5s2U (5-methoxycarbonylmethyl-2-thiouridine), and ncm5U (5-carbamoylmethyl uridine). The elongator complex catalyzes formation of carboxymethyluridine in the wobble base at position 34 in tRNAs. ELP1 binds to tRNA, mediating interaction of the elongator complex with tRNA. Binding by the elongator complex stabilizes microtubules and promotes their growth. This induces central spindle asymmetry, promoting polarized signaling endosome trafficking during asymmetric cell division and cell fate assignation of sensory organ precursor cells. Involved in protein synthesis-dependent long-term memory formation, probably as part of the elongator complex. This chain is Elongator complex protein 1, found in Drosophila melanogaster (Fruit fly).